Reading from the N-terminus, the 366-residue chain is MKAAADRLMAARAREGRTRVLIVDDSAMVRQALALGLSTDPRLEVVGTASGAEAARAQMAALKPDVVTLDLEMPQMDGLTFLRSYMESAPVPTVVISSLTRTSGETAMRAMEAGAVDIISKPSLGAGQGLPAIMRDVCARVWAAARARLALPDGAAPAPVAPGASEDWIHALGASTGGVQALSRILPFFPAQSPGLLVVQHMPEGFTAAFARRLDALCRMRVREAADGDLVLPGLVLIAPGGLRHMEIERAGGVCRVRLVAGAPVSYSRPSVDRMFLSLAAAAGPRVSAALLTGMGRDGAAGLLAIRRAGGRTFAQDEGSSAVFGMPLAARDLRAAEEILTLDDIPARMMLAAAADTRAPSLASND.

One can recognise a Response regulatory domain in the interval 19–136; sequence RVLIVDDSAM…GQGLPAIMRD (118 aa). Residue Asp-70 is modified to 4-aspartylphosphate. In terms of domain architecture, CheB-type methylesterase spans 162–356; that stretch reads PGASEDWIHA…ARMMLAAAAD (195 aa). Residues Ser-175, His-201, and Asp-298 contribute to the active site.

The protein belongs to the CheB family. Post-translationally, phosphorylated by CheA. Phosphorylation of the N-terminal regulatory domain activates the methylesterase activity.

It is found in the cytoplasm. The enzyme catalyses [protein]-L-glutamate 5-O-methyl ester + H2O = L-glutamyl-[protein] + methanol + H(+). It catalyses the reaction L-glutaminyl-[protein] + H2O = L-glutamyl-[protein] + NH4(+). In terms of biological role, involved in chemotaxis. Part of a chemotaxis signal transduction system that modulates chemotaxis in response to various stimuli. Catalyzes the demethylation of specific methylglutamate residues introduced into the chemoreceptors (methyl-accepting chemotaxis proteins or MCP) by CheR. Also mediates the irreversible deamidation of specific glutamine residues to glutamic acid. The polypeptide is Protein-glutamate methylesterase/protein-glutamine glutaminase of group 2 operon (Cereibacter sphaeroides (Rhodobacter sphaeroides)).